The primary structure comprises 206 residues: Ribosomal RNA small subunit methyltransferase G (206 aa).

Residues Gly-73, Leu-78, 124-125 (VE), and Arg-139 contribute to the S-adenosyl-L-methionine site.

This sequence belongs to the methyltransferase superfamily. RNA methyltransferase RsmG family.

Its subcellular location is the cytoplasm. It catalyses the reaction guanosine(527) in 16S rRNA + S-adenosyl-L-methionine = N(7)-methylguanosine(527) in 16S rRNA + S-adenosyl-L-homocysteine. Specifically methylates the N7 position of guanine in position 527 of 16S rRNA. This Sodalis glossinidius (strain morsitans) protein is Ribosomal RNA small subunit methyltransferase G.